Consider the following 428-residue polypeptide: Histone deacetylase 3 (428 aa).

Residues 3–316 are histone deacetylase; it reads NRTSYFYDPD…WTFETSLLLE (314 aa). 3 residues coordinate 1D-myo-inositol 1,4,5,6-tetrakisphosphate: histidine 17, glycine 21, and lysine 25. Histidine 135 is an active-site residue. Residues aspartate 170, histidine 172, and aspartate 259 each coordinate Zn(2+). A 1D-myo-inositol 1,4,5,6-tetrakisphosphate-binding site is contributed by arginine 265. A disordered region spans residues 385-428; that stretch reads LNYERNDEPDPDERGAEENYTRPEAANEFYDGDHDNDKESDVEI. Basic and acidic residues-rich tracts occupy residues 386-405 and 415-428; these read NYERNDEPDPDERGAEENYT and DGDHDNDKESDVEI.

This sequence belongs to the histone deacetylase family. HD type 1 subfamily.

It is found in the nucleus. It localises to the chromosome. Its subcellular location is the cytoplasm. The protein resides in the cytosol. The enzyme catalyses N(6)-acetyl-L-lysyl-[histone] + H2O = L-lysyl-[histone] + acetate. With respect to regulation, inositol tetraphosphate (1D-myo-inositol 1,4,5,6-tetrakisphosphate) promotes the histone deacetylase activity by acting as an intermolecular glue between hdac3 and N-Cor repressor complex components. Responsible for the deacetylation of lysine residues on the N-terminal part of the core histones (H2A, H2B, H3 and H4). Histone deacetylation gives a tag for epigenetic repression and plays an important role in transcriptional regulation, cell cycle progression and developmental events. Histone deacetylases act via the formation of large multiprotein complexes, such as N-Cor repressor complex, which activate the histone deacetylase activity. May play a role in the regulation of the circadian clock in a deacetylase activity-independent manner. The chain is Histone deacetylase 3 (hdac3) from Tetraodon nigroviridis (Spotted green pufferfish).